The following is a 779-amino-acid chain: METDVTSDTVEVLPQHKFDLRSLEAYLNQHLPGFGSDSRAVLTVTQYRSGQSNPTFFLQKGSQAYVLRKKPPGSLLPKAHKIDREFKIQKALFSIGFPVAKPLLYCRDASVIGTEFYVMEHVQGRIFRDFSIPGVSSAERAAIYVSVAETLAWLHSLDIRSLKLDKYGTGVGYCKRQVSTWTKQYQASAHQSIPAMDQLSTWLMKNLPDSDSEECLVHGDFKLDNIVFHPKECRVIAVLDWELSTFGHPLTDLAHLSLFYYWPRTLPMINRGSHIPENTGIPLMEELISIYCHRRGIDPNLPNWNFFMALSFFKLAGISQGVYRRYLMGNNSSEDSFLTANTVQPLAETGLQLSKRTLRTTPPQADAKSQLFAQSRRGQEVLTRVKQFMKQHVFPAEKEVAEYYAQSGNSAEKWGHPLVIEKLKEMAKAEGLWNLFLPAVSGLSQVDYALIAEETGKCFFAPDVFNCQAPDTGNMEVLHLYGSEQQKKQWLEPLLRGDITSVFCMTEPNVSSSDATNIECTIQRDGGGYIVNGKKWWSSGAGNPKCKIAIVLGRTESPSASRHRQHSMILVPMDTPGVELIRPLSVFGYMDNMHGGHWEVHFNHVRVPASNLILGEGRGFEISQGRLGPGRIHHCMRTVGLAERILQIMCDRAVQREAFKKKLYEHEVVAHWIAKSRIAIEEIRLLTLKAAHSIDTLGSASARKEIAMIKVAAPKAVCKIADWAIQVHGGAGVSQDYPLANMYAIIRTLRLADGPDEVHLSAIAKMELQDQARRLTARM.

Residues K163, K166, and K175 each carry the N6-acetyllysine modification. S210 bears the Phosphoserine mark. Y323 bears the Phosphotyrosine mark. Residues K368 and K390 each carry the N6-succinyllysine modification. FAD contacts are provided by residues 503–513 (FCMTEPNVSSS), 511–513 (SSS), 537–539 (WSS), and S539. S513 is a binding site for substrate. Residue 628–631 (GPGR) coordinates substrate. Residues R656, Q726, and 726–730 (QVHGG) each bind FAD. G754 is a substrate binding site. FAD-binding positions include 755–757 (PDE) and E757. At K765 the chain carries N6-acetyllysine.

Belongs to the acyl-CoA dehydrogenase family. In terms of assembly, homodimer. FAD serves as cofactor.

The protein localises to the peroxisome. The protein resides in the mitochondrion membrane. The catalysed reaction is a 2,3-saturated acyl-CoA + oxidized [electron-transfer flavoprotein] + H(+) = a (2E)-enoyl-CoA + reduced [electron-transfer flavoprotein]. The enzyme catalyses docosanoyl-CoA + oxidized [electron-transfer flavoprotein] + H(+) = (2E)-docosenoyl-CoA + reduced [electron-transfer flavoprotein]. It carries out the reaction tetracosanoyl-CoA + oxidized [electron-transfer flavoprotein] + H(+) = (2E)-tetracosenoyl-CoA + reduced [electron-transfer flavoprotein]. It catalyses the reaction eicosanoyl-CoA + oxidized [electron-transfer flavoprotein] + H(+) = (2E)-eicosenoyl-CoA + reduced [electron-transfer flavoprotein]. The catalysed reaction is hexacosanoyl-CoA + oxidized [electron-transfer flavoprotein] + H(+) = (2E)-hexacosenoyl-CoA + reduced [electron-transfer flavoprotein]. The enzyme catalyses tricosanoyl-CoA + oxidized [electron-transfer flavoprotein] + H(+) = (2E)-tricosenoyl-CoA + reduced [electron-transfer flavoprotein]. The protein operates within lipid metabolism; fatty acid beta-oxidation. Its function is as follows. Acyl-CoA dehydrogenase, that exhibits maximal activity towards saturated C22-CoA. Probably participates in beta-oxydation and energy production but could also play a role in the metabolism of specific fatty acids to control fatty acids composition of cellular lipids in brain. In Mus musculus (Mouse), this protein is Acyl-CoA dehydrogenase family member 11 (Acad11).